A 343-amino-acid polypeptide reads, in one-letter code: MLVVQMPFSFPVAHFILFVFTVSTIFHIQQRLAKIQAMWELPEQIPVLASTSKALGPSQLRGIWTINAIGRLGNQMGEYATLYALAKMNGRPAFIPAQMHSTLAPIFRITLPVLHSTTASRIPWQNYHLNDWMEEKYRHIPGEYVRLTGYPCSWTFYHHLRHEILQEFTLHDHVREEAQKFLRGLQVNGSQPSTFVGVHVRRGDYVHVMPKVWKGVVADRRYLQQALDWFRARYSSPIFVVTSNGMAWCQENIDTSHSDVVFAGDGIEGSPAKDFALLTQCNHTIMTIGTFGIWAAYLAGGDTIYLANYTLPDSPFLKIFKPEAAFLPEWTGIAADLSPLLKH.

At 1–14 (MLVVQMPFSFPVAH) the chain is on the cytoplasmic side. Residues 15–28 (FILFVFTVSTIFHI) traverse the membrane as a helical; Signal-anchor for type II membrane protein segment. Residues 29–343 (QQRLAKIQAM…AADLSPLLKH (315 aa)) are Lumenal-facing. N-linked (GlcNAc...) asparagine glycans are attached at residues Asn-188, Asn-282, and Asn-308.

It belongs to the glycosyltransferase 11 family.

The protein localises to the golgi apparatus. It localises to the golgi stack membrane. The enzyme catalyses a beta-D-galactosyl-(1-&gt;3)-N-acetyl-beta-D-glucosaminyl derivative + GDP-beta-L-fucose = an alpha-L-Fuc-(1-&gt;2)-beta-D-Gal-(1-&gt;3)-beta-D-GlcNAc derivative + GDP + H(+). The catalysed reaction is a beta-D-galactosyl-(1-&gt;4)-N-acetyl-beta-D-glucosaminyl derivative + GDP-beta-L-fucose = an alpha-L-Fuc-(1-&gt;2)-beta-D-Gal-(1-&gt;4)-beta-D-GlcNAc derivative + GDP + H(+). It catalyses the reaction a neolactoside nLc4Cer + GDP-beta-L-fucose = a neolactoside IV(2)-alpha-Fuc-nLc4Cer + GDP + H(+). It carries out the reaction a neolactoside nLc4Cer(d18:1(4E)) + GDP-beta-L-fucose = a neolactoside IV(2)-alpha-Fuc-nLc4Cer(d18:1(4E)) + GDP + H(+). The enzyme catalyses a ganglioside GM1 + GDP-beta-L-fucose = a ganglioside Fuc-GM1 + GDP + H(+). The catalysed reaction is a ganglioside GA1 + GDP-beta-L-fucose = a ganglioside Fuc-GA1 + GDP + H(+). It catalyses the reaction Lc4Cer + GDP-beta-L-fucose = alpha-L-fucosyl-(1-&gt;2)-beta-D-galactosyl-(1-&gt;3)-N-acetyl-beta-D-glucosaminyl-(1-&gt;3)-beta-D-galactosyl-(1-&gt;4)-beta-D-glucosyl-(1&lt;-&gt;1')-ceramide + GDP + H(+). It carries out the reaction a beta-D-Gal-(1-&gt;3)-beta-D-GlcNAc-(1-&gt;3)-beta-D-Gal-(1-&gt;4)-beta-D-Glc-(1&lt;-&gt;1')-Cer(d18:1(4E)) + GDP-beta-L-fucose = alpha-L-fucosyl-(1-&gt;2)- beta-D-galactosyl-(1-&gt;3)-N-acetyl-beta-D-glucosaminyl-(1-&gt;3)-beta-D-galactosyl-(1-&gt;4)-beta-D-glucosyl-(1&lt;-&gt;1')-N-acylsphing-4-enine + GDP + H(+). The enzyme catalyses a ganglioside GD1b + GDP-beta-L-fucose = a ganglioside Fuc-GD1b + GDP + H(+). The catalysed reaction is a ganglioside GM1 (d18:1(4E)) + GDP-beta-L-fucose = a ganglioside Fuc-GM1 (d18:1(4E)) + GDP + H(+). It catalyses the reaction a globoside GalGb4Cer (d18:1(4E)) + GDP-beta-L-fucose = a globoside Globo-H (d18:1(4E)) + GDP + H(+). It carries out the reaction a lactoside III(4)-a-Fuc-Lc4Cer + GDP-beta-L-fucose = a lactoside IV(2),III(4)-a-[Fuc]2-Lc4Cer + GDP + H(+). The enzyme catalyses beta-D-galactosyl-(1-&gt;3)-N-acetyl-D-galactosamine + GDP-beta-L-fucose = alpha-L-fucosyl-(1-&gt;2)-beta-D-galactosyl-(1-&gt;3)-N-acetyl-D-galactosamine + GDP + H(+). The protein operates within protein modification; protein glycosylation. Catalyzes the transfer of L-fucose, from a guanosine diphosphate-beta-L-fucose, to the terminal galactose on both O- and N-linked glycans chains of cell surface glycoproteins and glycolipids and the resulting epitope regulates several processes such as cell-cell interaction including host-microbe interaction, cell surface expression and cell proliferation. Preferentially fucosylates gangliosides GA1 and GM1 in the antrum, cecum and colon and in the female reproductive organs. Fucosylated host glycoproteins or glycolipids mediate interaction with intestinal microbiota influencing its composition. Creates a soluble precursor oligosaccharide FuC-alpha ((1,2)Galbeta-) called the H antigen which is an essential substrate for the final step in the soluble ABO blood group antigen synthesis pathway. In Pongo pygmaeus (Bornean orangutan), this protein is Galactoside alpha-(1,2)-fucosyltransferase 2.